A 203-amino-acid chain; its full sequence is MKTLVLLSSILGDRSKSKALADHFLARMCEHEPASDITVRDLAAQPVPYFDAETAGALFTPADARSDAQRAIVALSDALIAELQAAERVVFAVPTYNFNLPAQLKSYLDYVARAGITFRYTPEGVPEGLLQGKQVYVLIARGGKALGTPQDSMTPYLKQMLGFLGMQDVTVIAAEGMAMGEFAAAEGLAQAKARIDELLPQLA.

FMN is bound by residues Ser9 and 15–17 (SKS).

Belongs to the azoreductase type 1 family. In terms of assembly, homodimer. FMN serves as cofactor.

It carries out the reaction 2 a quinone + NADH + H(+) = 2 a 1,4-benzosemiquinone + NAD(+). The catalysed reaction is N,N-dimethyl-1,4-phenylenediamine + anthranilate + 2 NAD(+) = 2-(4-dimethylaminophenyl)diazenylbenzoate + 2 NADH + 2 H(+). Its function is as follows. Quinone reductase that provides resistance to thiol-specific stress caused by electrophilic quinones. In terms of biological role, also exhibits azoreductase activity. Catalyzes the reductive cleavage of the azo bond in aromatic azo compounds to the corresponding amines. In Bordetella avium (strain 197N), this protein is FMN-dependent NADH:quinone oxidoreductase.